We begin with the raw amino-acid sequence, 70 residues long: Small ribosomal subunit protein bS21 (70 aa).

This sequence belongs to the bacterial ribosomal protein bS21 family.

The protein is Small ribosomal subunit protein bS21 of Campylobacter curvus (strain 525.92).